Consider the following 356-residue polypeptide: Outer membrane protein Omp38 (356 aa).

The N-terminal stretch at 1-19 is a signal peptide; that stretch reads MKLSRIALATMLVAAPLAA. Positions 221–339 constitute an OmpA-like domain; that stretch reads ELTEDLNMEL…RVFATITGSR (119 aa).

The protein belongs to the outer membrane OOP (TC 1.B.6) superfamily. As to quaternary structure, homotrimer.

The protein localises to the cell outer membrane. Its function is as follows. Porin. Induces apoptosis in human cells through caspases-dependent and AIF-dependent pathways. Purified Omp38 enters the cells and localizes to the mitochondria, which leads to a release of proapoptotic molecules such as cytochrome c and AIF (apoptosis-inducing factor). This chain is Outer membrane protein Omp38 (omp38), found in Acinetobacter baumannii (strain ATCC 17978 / DSM 105126 / CIP 53.77 / LMG 1025 / NCDC KC755 / 5377).